The following is a 442-amino-acid chain: 5'-deoxyadenosine deaminase (442 aa).

Zn(2+) contacts are provided by H72 and H74. Positions 101 and 193 each coordinate substrate. H220 lines the Zn(2+) pocket. Residues E223 and D309 each coordinate substrate. Zn(2+) is bound at residue D309.

It belongs to the metallo-dependent hydrolases superfamily. MTA/SAH deaminase family. Homotetramer. The cofactor is Zn(2+).

The catalysed reaction is 5'-deoxyadenosine + H2O + H(+) = 5'-deoxyinosine + NH4(+). The enzyme catalyses S-adenosyl-L-homocysteine + H2O + H(+) = S-inosyl-L-homocysteine + NH4(+). It carries out the reaction S-methyl-5'-thioadenosine + H2O + H(+) = S-methyl-5'-thioinosine + NH4(+). It catalyses the reaction adenosine + H2O + H(+) = inosine + NH4(+). Its pathway is amino-acid biosynthesis; S-adenosyl-L-methionine biosynthesis. Functionally, catalyzes the deamination of three SAM-derived enzymatic products, namely 5'-deoxyadenosine, S-adenosyl-L-homocysteine, and 5'-methylthioadenosine, to produce the inosine analogs. Can also deaminate adenosine. The preferred substrate for this enzyme is 5'-deoxyadenosine, but all these substrates are efficiently deaminated. Likely functions in a S-adenosyl-L-methionine (SAM) recycling pathway from S-adenosyl-L-homocysteine (SAH) produced from SAM-dependent methylation reactions. May also be involved in the recycling of 5'-deoxyadenosine, whereupon the 5'-deoxyribose moiety of 5'-deoxyinosine is further metabolized to deoxyhexoses used for the biosynthesis of aromatic amino acids in methanogens. This chain is 5'-deoxyadenosine deaminase, found in Methanoregula boonei (strain DSM 21154 / JCM 14090 / 6A8).